The following is a 419-amino-acid chain: rRNA methyltransferase 3, mitochondrial (419 aa).

A mitochondrion-targeting transit peptide spans 1–39 (MAALCGGMLRGCILKPLGLSGSLQLKRNVRALRRTPVRV). Residues 42–68 (ADEEGRERKQVEASRQRQPRQNESQAC) are disordered. Residues 44 to 56 (EEGRERKQVEASR) show a composition bias toward basic and acidic residues. S-adenosyl-L-methionine-binding residues include G357, I381, and L390.

It belongs to the class IV-like SAM-binding methyltransferase superfamily. RNA methyltransferase TrmH family.

The protein localises to the mitochondrion. It carries out the reaction a uridine in rRNA + S-adenosyl-L-methionine = a 2'-O-methyluridine in rRNA + S-adenosyl-L-homocysteine + H(+). S-adenosyl-L-methionine-dependent 2'-O-ribose methyltransferase that catalyzes the formation of 2'-O-methylguanosine at position 1370 (Gm1370) in the mitochondrial large subunit ribosomal RNA (mtLSU rRNA), a conserved modification in the peptidyl transferase domain of the mtLSU rRNA. Also required for formation of 2'-O-methyluridine at position 1369 (Um1369) mediated by MRM2. The protein is rRNA methyltransferase 3, mitochondrial of Xenopus laevis (African clawed frog).